The sequence spans 534 residues: CTP synthase (534 aa).

An amidoligase domain region spans residues 1–265 (MKYIIVTGGV…TTQLMKHLQL (265 aa)). Serine 12 is a CTP binding site. Residue serine 12 coordinates UTP. Residue 13 to 18 (GLGKGI) participates in ATP binding. Tyrosine 53 provides a ligand contact to L-glutamine. ATP is bound at residue aspartate 70. Aspartate 70 and glutamate 140 together coordinate Mg(2+). Residues 147 to 149 (DIE), 186 to 191 (KTKPSQ), and lysine 222 contribute to the CTP site. UTP-binding positions include 186–191 (KTKPSQ) and lysine 222. In terms of domain architecture, Glutamine amidotransferase type-1 spans 289-530 (KLAIVGKYTN…VAAMCKYRKE (242 aa)). Glycine 352 is an L-glutamine binding site. The active-site Nucleophile; for glutamine hydrolysis is the cysteine 379. L-glutamine contacts are provided by residues 380-383 (LGMQ), glutamate 403, and arginine 460. Active-site residues include histidine 503 and glutamate 505.

Belongs to the CTP synthase family. In terms of assembly, homotetramer.

It carries out the reaction UTP + L-glutamine + ATP + H2O = CTP + L-glutamate + ADP + phosphate + 2 H(+). It catalyses the reaction L-glutamine + H2O = L-glutamate + NH4(+). The enzyme catalyses UTP + NH4(+) + ATP = CTP + ADP + phosphate + 2 H(+). Its pathway is pyrimidine metabolism; CTP biosynthesis via de novo pathway; CTP from UDP: step 2/2. Its activity is regulated as follows. Allosterically activated by GTP, when glutamine is the substrate; GTP has no effect on the reaction when ammonia is the substrate. The allosteric effector GTP functions by stabilizing the protein conformation that binds the tetrahedral intermediate(s) formed during glutamine hydrolysis. Inhibited by the product CTP, via allosteric rather than competitive inhibition. Functionally, catalyzes the ATP-dependent amination of UTP to CTP with either L-glutamine or ammonia as the source of nitrogen. Regulates intracellular CTP levels through interactions with the four ribonucleotide triphosphates. This Methanosarcina barkeri (strain Fusaro / DSM 804) protein is CTP synthase.